Consider the following 119-residue polypeptide: Large ribosomal subunit protein bL20 (119 aa).

Belongs to the bacterial ribosomal protein bL20 family.

Binds directly to 23S ribosomal RNA and is necessary for the in vitro assembly process of the 50S ribosomal subunit. It is not involved in the protein synthesizing functions of that subunit. This is Large ribosomal subunit protein bL20 from Thermoanaerobacter pseudethanolicus (strain ATCC 33223 / 39E) (Clostridium thermohydrosulfuricum).